A 311-amino-acid polypeptide reads, in one-letter code: MKVLFWGTPDFAVKSLKALIESNHQVVGVITQPDKPRGRGQKIQPTPVKEEALKHNIPVFQPEKIKNNQEILETIKKLNPDISVVVAYGKILPEEIINIPKYKTINVHASLLPEYRGAAPIQRAIMEGKDKTGVCIMEIIKELDAGDVYACREVEITEDDDIISLHDKLAEEGARLLIKVLDKIEKGEIDKKPQDHEKATYAKPIEKSEGKIDFSRSAKEIFNQIRALKVWPKAYAKFRDEEVKILDAKIVECNLNALPGEIIKADEKEGIVVKTGDGCLLLKIIQFPNSKPITTQDAIRGYKIKAGERFE.

Residue 110-113 (SLLP) coordinates (6S)-5,6,7,8-tetrahydrofolate.

The protein belongs to the Fmt family.

It carries out the reaction L-methionyl-tRNA(fMet) + (6R)-10-formyltetrahydrofolate = N-formyl-L-methionyl-tRNA(fMet) + (6S)-5,6,7,8-tetrahydrofolate + H(+). Functionally, attaches a formyl group to the free amino group of methionyl-tRNA(fMet). The formyl group appears to play a dual role in the initiator identity of N-formylmethionyl-tRNA by promoting its recognition by IF2 and preventing the misappropriation of this tRNA by the elongation apparatus. This chain is Methionyl-tRNA formyltransferase, found in Sulfurihydrogenibium sp. (strain YO3AOP1).